The sequence spans 583 residues: Aspartyl protease APCB1 (583 aa).

The chain crosses the membrane as a helical span at residues 83-103 (LVLGLLGISLLAVAFYASVFP). In terms of domain architecture, Peptidase A1 spans 203–564 (YYTRILVGKP…DNVKRRIGWM (362 aa)). Active-site residues include D223 and D431.

Belongs to the peptidase A1 family. As to quaternary structure, interacts with BAG6 and BAGP1.

It is found in the membrane. In terms of biological role, involved in proteolytic processing of BAG6 and plant basal immunity. This Arabidopsis thaliana (Mouse-ear cress) protein is Aspartyl protease APCB1.